Consider the following 436-residue polypeptide: MKGVRKPYDNSYTLSFLLVFFVLILFCPAFSINTLSSTESLRISSNRTLVSPGNNFELGFFRTNSSSRWYLGIWYKKLLDRTYVWVANRDNPLSNAIGTLKISGNNLVLLGHTNKSVWSTNLTRGNERLPVVAELLSNGNFVMRDSSNNDASEYLWQSFDYPTDTLLPEMKLGYDLKTGLNRFLTSWRSSDDPSSGDFSYKLETRSLPEFYLWHGIFPMHRSGPWNGVRFSGIPEDQKLSYMVYNFTENSEEVAYTFRMTNNSIYSRLTLSSEGYFQRLTWNPSIGIWNRFWSSPVDPQCDTYIMCGPYAYCGVNTSPVCNCIQGFNPRNIQQWDQRVWAGGCIRRTRLSCSGDGFTRMKNMKLPETTMAIVDRSIGVKECEKRCLSDCNCTAFANADIRNGGTGCVIWTGRLDDMRNYVAHGQDLYVRLAVADLV.

The N-terminal stretch at 1-31 is a signal peptide; that stretch reads MKGVRKPYDNSYTLSFLLVFFVLILFCPAFS. The region spanning 34–156 is the Bulb-type lectin domain; it reads TLSSTESLRI…SNNDASEYLW (123 aa). N-linked (GlcNAc...) asparagine glycans are attached at residues Asn-46, Asn-64, Asn-114, Asn-121, Asn-245, Asn-261, and Asn-390. The PAN domain occupies 351-431; that stretch reads CSGDGFTRMK…HGQDLYVRLA (81 aa). Intrachain disulfides connect Cys-381/Cys-406 and Cys-389/Cys-391.

Stigma.

Involved in sporophytic self-incompatibility system (the inability of flowering plants to achieve self-fertilization). The polypeptide is S-locus-specific glycoprotein S6 (SLSG) (Brassica oleracea (Wild cabbage)).